A 147-amino-acid chain; its full sequence is Large ribosomal subunit protein uL15 (147 aa).

Basic and acidic residues predominate over residues 1–13; that stretch reads MRLHDLKPAEGAR. Positions 1-58 are disordered; it reads MRLHDLKPAEGARRERKRVGRGIGSGHGKTSGRGQKGQKARSGGGVRPGFEGGQMPLT. Gly residues-rich tracts occupy residues 21-35 and 42-52; these read RGIG…GRGQ and SGGGVRPGFEG.

The protein belongs to the universal ribosomal protein uL15 family. In terms of assembly, part of the 50S ribosomal subunit.

In terms of biological role, binds to the 23S rRNA. In Thermoanaerobacter sp. (strain X514), this protein is Large ribosomal subunit protein uL15.